The chain runs to 321 residues: Malate dehydrogenase (321 aa).

NAD(+) is bound by residues 11-16 (GSGNIG) and Asp-35. 2 residues coordinate substrate: Arg-84 and Arg-90. Residues Asn-97 and 120–122 (ITN) contribute to the NAD(+) site. Asn-122 and Arg-153 together coordinate substrate. His-177 acts as the Proton acceptor in catalysis.

Belongs to the LDH/MDH superfamily. MDH type 3 family.

The enzyme catalyses (S)-malate + NAD(+) = oxaloacetate + NADH + H(+). Catalyzes the reversible oxidation of malate to oxaloacetate. In Rickettsia peacockii (strain Rustic), this protein is Malate dehydrogenase.